A 320-amino-acid chain; its full sequence is Replication factor C small subunit 2 (320 aa).

44-51 (GPPGTGKT) contributes to the ATP binding site.

Belongs to the activator 1 small subunits family. RfcS subfamily. In terms of assembly, heteromultimer composed of small subunits (RfcS) and large subunits (RfcL).

Its function is as follows. Part of the RFC clamp loader complex which loads the PCNA sliding clamp onto DNA. This is Replication factor C small subunit 2 from Pyrobaculum islandicum (strain DSM 4184 / JCM 9189 / GEO3).